Reading from the N-terminus, the 83-residue chain is Small ribosomal subunit protein bS16 (83 aa).

Belongs to the bacterial ribosomal protein bS16 family.

The protein is Small ribosomal subunit protein bS16 of Shewanella halifaxensis (strain HAW-EB4).